We begin with the raw amino-acid sequence, 155 residues long: Transcriptional repressor NrdR (155 aa).

A zinc finger spans residues 3–34 (CPFCGNVDTQVKDSRPAEDHVSIRRRRFCPAC). The 91-residue stretch at 49 to 139 (LVVIKTNGKR…VYKNFQAADD (91 aa)) folds into the ATP-cone domain.

It belongs to the NrdR family. Zn(2+) is required as a cofactor.

In terms of biological role, negatively regulates transcription of bacterial ribonucleotide reductase nrd genes and operons by binding to NrdR-boxes. In Ruegeria sp. (strain TM1040) (Silicibacter sp.), this protein is Transcriptional repressor NrdR.